A 203-amino-acid polypeptide reads, in one-letter code: Outer-membrane lipoprotein carrier protein (203 aa).

The N-terminal stretch at 1 to 20 (MKKWLAISCLIAGMTSTAVY) is a signal peptide.

It belongs to the LolA family. Monomer.

It localises to the periplasm. Participates in the translocation of lipoproteins from the inner membrane to the outer membrane. Only forms a complex with a lipoprotein if the residue after the N-terminal Cys is not an aspartate (The Asp acts as a targeting signal to indicate that the lipoprotein should stay in the inner membrane). The chain is Outer-membrane lipoprotein carrier protein from Pectobacterium carotovorum subsp. carotovorum (strain PC1).